The primary structure comprises 387 residues: Phosphoglycerate kinase (387 aa).

Substrate contacts are provided by residues 21–23 (DLN), Arg-36, 59–62 (HLGR), Arg-113, and Arg-146. Residues Lys-197, Glu-314, and 340–343 (GGDT) contribute to the ATP site.

It belongs to the phosphoglycerate kinase family. Monomer.

It is found in the cytoplasm. It carries out the reaction (2R)-3-phosphoglycerate + ATP = (2R)-3-phospho-glyceroyl phosphate + ADP. It participates in carbohydrate degradation; glycolysis; pyruvate from D-glyceraldehyde 3-phosphate: step 2/5. This chain is Phosphoglycerate kinase, found in Pseudomonas putida (strain ATCC 700007 / DSM 6899 / JCM 31910 / BCRC 17059 / LMG 24140 / F1).